Reading from the N-terminus, the 307-residue chain is Acetaldehyde dehydrogenase (307 aa).

12-15 (SGNI) lines the NAD(+) pocket. The Acyl-thioester intermediate role is filled by Cys127. NAD(+) contacts are provided by residues 158–166 (SAGPGTRQN) and Asn278.

Belongs to the acetaldehyde dehydrogenase family. As to quaternary structure, monomer. Can also form a heterotetramer composed of two aldolase (TTHB246) and two dehydrogenase (TTHB247) subunits. Upon complex formation, the aldolase shows a 5-fold increase in substrate affinity, while the dehydrogenase shows a 3-fold decrease; the kcat values of each enzyme are reduced by 2-fold when they are in a complex.

The catalysed reaction is acetaldehyde + NAD(+) + CoA = acetyl-CoA + NADH + H(+). It carries out the reaction propanal + NAD(+) + CoA = propanoyl-CoA + NADH + H(+). In terms of biological role, catalyzes the conversion of acetaldehyde or propanal to acetyl-CoA or propanoyl-CoA, respectively, using NAD(+) and coenzyme A. The aldehyde substrates can be directly channeled from the aldolase TTHB246 to the dehydrogenase TTHB247. Is the final enzyme in the meta-cleavage pathway for the degradation of aromatic compounds. The polypeptide is Acetaldehyde dehydrogenase (Thermus thermophilus (strain ATCC 27634 / DSM 579 / HB8)).